We begin with the raw amino-acid sequence, 148 residues long: Leghemoglobin 29 (148 aa).

A Globin domain is found at 2-148 (EFTLRQEALV…LAVAIMKEMS (147 aa)). Nitrated tyrosine is present on Y30. S45 contributes to the heme b binding site. Position 45 is a phosphoserine (S45). Position 63 (H63) interacts with O2. H95 and K98 together coordinate heme b. Position 136 is a nitrated tyrosine (Y136).

This sequence belongs to the plant globin family. In terms of assembly, monomer. Nitrated in effective nodules and particularly in hypoxic conditions; this mechanism may play a protective role in the symbiosis by buffering toxic peroxynitrite NO(2)(-). Nitration level decrease during nodule senescence. Post-translationally, phosphorylation at Ser-45 disrupts the molecular environment of its porphyrin ring oxygen binding pocket, thus leading to a reduced oxygen consumption and to the delivery of oxygen O(2) to symbiosomes. Accumulates in root nodules after inoculation by bacteria of the genus Rhizobium. Expressed in mycorrhizal roots in the presence of the mycorrhizal fungus Glomus fasciculatum.

It localises to the cytoplasm. Its subcellular location is the cytosol. The protein localises to the nucleus. In terms of biological role, leghemoglobin that reversibly binds oxygen O(2) through a pentacoordinated heme iron. In root nodules, facilitates the diffusion of oxygen to the bacteroids while preventing the bacterial nitrogenase from being inactivated by buffering dioxygen, nitric oxide and carbon monoxide, and promoting the formation of reactive oxygen species (ROS, e.g. H(2)O(2)). This role is essential for symbiotic nitrogen fixation (SNF). The sequence is that of Leghemoglobin 29 from Vicia faba (Broad bean).